Consider the following 423-residue polypeptide: Glutamate-1-semialdehyde 2,1-aminomutase (423 aa).

Position 258 is an N6-(pyridoxal phosphate)lysine (K258).

Belongs to the class-III pyridoxal-phosphate-dependent aminotransferase family. HemL subfamily. It depends on pyridoxal 5'-phosphate as a cofactor.

It is found in the cytoplasm. The enzyme catalyses (S)-4-amino-5-oxopentanoate = 5-aminolevulinate. It participates in porphyrin-containing compound metabolism; protoporphyrin-IX biosynthesis; 5-aminolevulinate from L-glutamyl-tRNA(Glu): step 2/2. This is Glutamate-1-semialdehyde 2,1-aminomutase from Pyrobaculum aerophilum (strain ATCC 51768 / DSM 7523 / JCM 9630 / CIP 104966 / NBRC 100827 / IM2).